Consider the following 162-residue polypeptide: Nucleotide-binding protein Anae109_0095 (162 aa).

This sequence belongs to the YajQ family.

In terms of biological role, nucleotide-binding protein. This Anaeromyxobacter sp. (strain Fw109-5) protein is Nucleotide-binding protein Anae109_0095.